Consider the following 476-residue polypeptide: Siroheme synthase (476 aa).

The segment at 1 to 203 (MHYFPVFADL…RQTEAAKKEL (203 aa)) is precorrin-2 dehydrogenase /sirohydrochlorin ferrochelatase. Residues 22–23 (GV) and 43–44 (QK) contribute to the NAD(+) site. S128 bears the Phosphoserine mark. The tract at residues 214 to 476 (GFVSLVGAGP…LDSLRIESVA (263 aa)) is uroporphyrinogen-III C-methyltransferase. Residue P223 participates in S-adenosyl-L-methionine binding. D246 serves as the catalytic Proton acceptor. K268 (proton donor) is an active-site residue. Residues 299–301 (GGD), V304, 329–330 (TA), M381, and G410 each bind S-adenosyl-L-methionine.

This sequence in the N-terminal section; belongs to the precorrin-2 dehydrogenase / sirohydrochlorin ferrochelatase family. In the C-terminal section; belongs to the precorrin methyltransferase family.

The enzyme catalyses uroporphyrinogen III + 2 S-adenosyl-L-methionine = precorrin-2 + 2 S-adenosyl-L-homocysteine + H(+). The catalysed reaction is precorrin-2 + NAD(+) = sirohydrochlorin + NADH + 2 H(+). It carries out the reaction siroheme + 2 H(+) = sirohydrochlorin + Fe(2+). It participates in cofactor biosynthesis; adenosylcobalamin biosynthesis; precorrin-2 from uroporphyrinogen III: step 1/1. It functions in the pathway cofactor biosynthesis; adenosylcobalamin biosynthesis; sirohydrochlorin from precorrin-2: step 1/1. The protein operates within porphyrin-containing compound metabolism; siroheme biosynthesis; precorrin-2 from uroporphyrinogen III: step 1/1. Its pathway is porphyrin-containing compound metabolism; siroheme biosynthesis; siroheme from sirohydrochlorin: step 1/1. It participates in porphyrin-containing compound metabolism; siroheme biosynthesis; sirohydrochlorin from precorrin-2: step 1/1. Functionally, multifunctional enzyme that catalyzes the SAM-dependent methylations of uroporphyrinogen III at position C-2 and C-7 to form precorrin-2 via precorrin-1. Then it catalyzes the NAD-dependent ring dehydrogenation of precorrin-2 to yield sirohydrochlorin. Finally, it catalyzes the ferrochelation of sirohydrochlorin to yield siroheme. This is Siroheme synthase from Actinobacillus succinogenes (strain ATCC 55618 / DSM 22257 / CCUG 43843 / 130Z).